The chain runs to 475 residues: GTPase Der (475 aa).

2 consecutive EngA-type G domains span residues 2–166 (LRIA…NIPE) and 213–386 (LKIA…ETVS). GTP-binding positions include 8-15 (GRPNVGKS), 55-59 (DTGGV), 118-121 (NKAD), 219-226 (GRPNVGKS), 266-270 (DTAGL), and 331-334 (NKWD). The KH-like domain occupies 387 to 471 (RKVPTPVVNK…PFDLEIKEKA (85 aa)).

This sequence belongs to the TRAFAC class TrmE-Era-EngA-EngB-Septin-like GTPase superfamily. EngA (Der) GTPase family. Associates with the 50S ribosomal subunit.

In terms of biological role, GTPase that plays an essential role in the late steps of ribosome biogenesis. This is GTPase Der from Chlamydia felis (strain Fe/C-56) (Chlamydophila felis).